We begin with the raw amino-acid sequence, 2364 residues long: Cytotoxin-L (2364 aa).

The tract at residues 1–91 (MSLVNKAQLQ…EVLELKNNSL (91 aa)) is four-helical bundle. The GT44 domain occupies 96 to 468 (KNLHFIWIGG…APDVRSTINL (373 aa)). The segment at 96–468 (KNLHFIWIGG…APDVRSTINL (373 aa)) is glucosyltransferase region. UDP-alpha-D-glucose contacts are provided by residues 101–103 (IWI), Asn-139, 265–270 (LAAASD), and 286–288 (DVD). Residues Asp-288, Glu-515, and Ser-518 each contribute to the Mg(2+) site. Residue 518-520 (SLW) coordinates UDP-alpha-D-glucose. The segment at 544 to 799 (GEDDILDFSQ…KSKNLHELST (256 aa)) is autoprocessing region. The Zn(2+) site is built by Glu-545 and Asp-546. Residues 567-774 (SSSMRTPNKE…EESIIKDISS (208 aa)) enclose the Peptidase C80 domain. 1D-myo-inositol hexakisphosphate contacts are provided by Tyr-577, Lys-600, and Lys-647. Zn(2+) is bound at residue His-653. The active-site For protease activity is His-653. Cys-698 (nucleophile; for protease activity) is an active-site residue. His-757 contacts Zn(2+). 1D-myo-inositol hexakisphosphate is bound by residues Lys-764, Lys-775, and Lys-792. The interval 800-1500 (LLQEIKNNSN…ESIIRNIYMP (701 aa)) is translocation region. 5 interaction with host SEMA6A and SEMA6B regions span residues 1433–1438 (CIKLIE), 1466–1471 (DNETKY), 1484–1495 (FTAEFSNESIIR), 1504–1511 (NLFIYSSK), and 1596–1601 (YNNLDP). Cell wall-binding repeat units follow at residues 1833–1852 (VSGL…PKNN), 1854–1873 (ITGF…TKSG), 1876–1895 (SIGE…QGIL), 1926–1945 (FIGK…NYRA), 1946–1965 (AVEW…KTGE), 1967–1986 (LKGL…NGIM), 1987–2006 (QTGF…DGVM), 2007–2026 (QVGY…NGER), 2057–2076 (YNGI…SNTA), 2077–2097 (VVGW…NTAE), 2099–2118 (CIGL…NGIR), 2119–2138 (QLGF…SGKI), 2139–2158 (ELGY…SGLV), 2209–2224 (ETGW…YFDP), 2227–2249 (KKAY…NGIM), 2250–2269 (KTGL…DGKM), 2270–2289 (QFGY…DGKM), 2320–2339 (YTGW…EYIA), and 2340–2359 (ATSS…DTAE). Residues 1835–2364 (GLIYINDSLY…PDTAELVVSE (530 aa)) are receptor-binding (CROPS) region.

This sequence belongs to the clostridial glucosylating toxin (LCGT) family. In terms of assembly, homomultimer; forms an inactive homomultimer at pH 8, which dissociates at pH 4, leading to cytotoxicity. Interacts with host SEMA6A; interaction promotes toxin entry into host cell. Interacts with host SEMA6B; interaction promotes toxin entry into host cell. Requires Zn(2+) as cofactor. Mn(2+) is required as a cofactor. The cofactor is Mg(2+). Post-translationally, undergoes autocatalytic cleavage to release the N-terminal part (Glucosyltransferase TcsL), which constitutes the active part of the toxin, in the host cytosol. 1D-myo-inositol hexakisphosphate-binding (InsP6) activates the peptidase C80 domain and promotes autoprocessing.

Its subcellular location is the secreted. The protein resides in the host endosome membrane. It is found in the host cytoplasm. The protein localises to the host cytosol. It localises to the host cell membrane. It catalyses the reaction L-threonyl-[protein] + UDP-alpha-D-glucose = 3-O-(alpha-D-glucosyl)-L-threonyl-[protein] + UDP + H(+). Its activity is regulated as follows. Protease activity is activated upon binding to 1D-myo-inositol hexakisphosphate (InsP6), which induces conformational reorganization. Precursor of a cytotoxin that targets the vascular endothelium, inducing an anti-inflammatory effect and resulting in lethal toxic shock syndrome. TcsL constitutes the main toxin that mediates the pathology of P.sordellii infection, an anaerobic Gram-positive bacterium found in soil and in the gastrointestinal and vaginal tracts of animals and humans; although the majority of carriers are asymptomatic, pathogenic P.sordellii infections arise rapidly and are highly lethal. This form constitutes the precursor of the toxin: it enters into host cells and mediates autoprocessing to release the active toxin (Glucosyltransferase TcsL) into the host cytosol. Targets vascular endothelium by binding to the semaphorin proteins SEMA6A and SEMA6B, and enters host cells via clathrin-mediated endocytosis. Once entered into host cells, acidification in the endosome promotes the membrane insertion of the translocation region and formation of a pore, leading to translocation of the GT44 and peptidase C80 domains across the endosomal membrane. This activates the peptidase C80 domain and autocatalytic processing, releasing the N-terminal part (Glucosyltransferase TcsL), which constitutes the active part of the toxin, in the cytosol. In terms of biological role, active form of the toxin, which is released into the host cytosol following autoprocessing and inactivates small GTPases. Acts by mediating monoglucosylation of small GTPases of the Ras (H-Ras/HRAS, K-Ras/KRAS and N-Ras/NRAS) family in host cells at the conserved threonine residue located in the switch I region ('Thr-37/35'), using UDP-alpha-D-glucose as the sugar donor. Does not catalyze monoglucosylation of Ral/RALA. Also able to catalyze monoglucosylation of some members of the Rho family (Rac1 and Rap2A), but with less efficiency than with Ras proteins. Monoglucosylation of host small GTPases completely prevents the recognition of the downstream effector, blocking the GTPases in their inactive form and leading to apoptosis. Induces an anti-inflammatory effect, mainly by inactivating Ras proteins which results in blockage of the cell cycle and killing of immune cells. The absence or moderate local inflammatory response allows C.sordellii spreading in deep tissues, production of toxin which is released in the general circulation and causes a toxic shock syndrome. The polypeptide is Cytotoxin-L (Paraclostridium sordellii (Clostridium sordellii)).